The primary structure comprises 273 residues: Rho GTPase-activating protein gacB (273 aa).

A Rho-GAP domain is found at 1–192 (MTDQTLRLEN…YLISHFNEIF (192 aa)).

It is found in the cytoplasm. Its function is as follows. Rho GTPase-activating protein involved in the signal transduction pathway. The polypeptide is Rho GTPase-activating protein gacB (gacB) (Dictyostelium discoideum (Social amoeba)).